We begin with the raw amino-acid sequence, 295 residues long: Sperm acrosome membrane-associated protein 1 (295 aa).

The first 29 residues, 1–29, serve as a signal peptide directing secretion; sequence MSPGGAGCSAGLLLTVGWLLLAGLQSTCG. At 30–220 the chain is on the extracellular side; it reads INVTAVQDPS…SRPDTDAVLV (191 aa). Residues 39 to 71 are disordered; the sequence is SLVSEGENEGEEEAENDSEVENEPQAEAEQDVS. Residues 44–68 show a composition bias toward acidic residues; it reads GENEGEEEAENDSEVENEPQAEAEQ. An N-linked (GlcNAc...) asparagine glycan is attached at asparagine 72. Residues 221–241 traverse the membrane as a helical segment; that stretch reads FVLTIGVIICIFVIFVLIFII. Over 242–295 the chain is Cytoplasmic; that stretch reads VNWATVKDFWASKASTTEIQSELSSMKYKDSTSLDQSPTEIPGHEDDALSEWNE. A Phosphoserine modification is found at serine 256. The disordered stretch occupies residues 263–295; that stretch reads ELSSMKYKDSTSLDQSPTEIPGHEDDALSEWNE. Tyrosine 269 carries the post-translational modification Phosphotyrosine. 2 positions are modified to phosphoserine: serine 278 and serine 291.

As to quaternary structure, interacts with CYLC1; the interaction may be relevant for proper acrosome attachment to the nuclear envelope. Post-translationally, N-glycosylated. As to expression, detected in spermatozoa (at protein level).

Its subcellular location is the cytoplasmic vesicle. It is found in the secretory vesicle. The protein resides in the acrosome inner membrane. Its function is as follows. Plays a role in acrosome expansion and establishment of normal sperm morphology during spermatogenesis. Important for male fertility. The sequence is that of Sperm acrosome membrane-associated protein 1 from Sus scrofa (Pig).